Here is a 177-residue protein sequence, read N- to C-terminus: ATP synthase subunit delta (177 aa).

Belongs to the ATPase delta chain family. In terms of assembly, F-type ATPases have 2 components, F(1) - the catalytic core - and F(0) - the membrane proton channel. F(1) has five subunits: alpha(3), beta(3), gamma(1), delta(1), epsilon(1). F(0) has three main subunits: a(1), b(2) and c(10-14). The alpha and beta chains form an alternating ring which encloses part of the gamma chain. F(1) is attached to F(0) by a central stalk formed by the gamma and epsilon chains, while a peripheral stalk is formed by the delta and b chains.

The protein localises to the cell inner membrane. In terms of biological role, f(1)F(0) ATP synthase produces ATP from ADP in the presence of a proton or sodium gradient. F-type ATPases consist of two structural domains, F(1) containing the extramembraneous catalytic core and F(0) containing the membrane proton channel, linked together by a central stalk and a peripheral stalk. During catalysis, ATP synthesis in the catalytic domain of F(1) is coupled via a rotary mechanism of the central stalk subunits to proton translocation. This protein is part of the stalk that links CF(0) to CF(1). It either transmits conformational changes from CF(0) to CF(1) or is implicated in proton conduction. In Herminiimonas arsenicoxydans, this protein is ATP synthase subunit delta.